Reading from the N-terminus, the 366-residue chain is Chorismate synthase (366 aa).

NADP(+) is bound by residues Arg48 and Arg54. FMN-binding positions include 125–127, 238–239, Gly278, 293–297, and Arg319; these read RSS, NA, and KPTSS.

The protein belongs to the chorismate synthase family. Homotetramer. FMNH2 is required as a cofactor.

It carries out the reaction 5-O-(1-carboxyvinyl)-3-phosphoshikimate = chorismate + phosphate. It participates in metabolic intermediate biosynthesis; chorismate biosynthesis; chorismate from D-erythrose 4-phosphate and phosphoenolpyruvate: step 7/7. Its function is as follows. Catalyzes the anti-1,4-elimination of the C-3 phosphate and the C-6 proR hydrogen from 5-enolpyruvylshikimate-3-phosphate (EPSP) to yield chorismate, which is the branch point compound that serves as the starting substrate for the three terminal pathways of aromatic amino acid biosynthesis. This reaction introduces a second double bond into the aromatic ring system. This is Chorismate synthase from Neisseria gonorrhoeae (strain NCCP11945).